The following is a 252-amino-acid chain: 3-dehydroquinate dehydratase (252 aa).

3-dehydroquinate contacts are provided by residues S21, 46 to 48 (EWR), and R82. H143 functions as the Proton donor/acceptor in the catalytic mechanism. K170 (schiff-base intermediate with substrate) is an active-site residue. 3-dehydroquinate contacts are provided by R213, S232, and Q236.

Belongs to the type-I 3-dehydroquinase family. As to quaternary structure, homodimer.

It carries out the reaction 3-dehydroquinate = 3-dehydroshikimate + H2O. Its pathway is metabolic intermediate biosynthesis; chorismate biosynthesis; chorismate from D-erythrose 4-phosphate and phosphoenolpyruvate: step 3/7. Involved in the third step of the chorismate pathway, which leads to the biosynthesis of aromatic amino acids. Catalyzes the cis-dehydration of 3-dehydroquinate (DHQ) and introduces the first double bond of the aromatic ring to yield 3-dehydroshikimate. This is 3-dehydroquinate dehydratase from Escherichia coli (strain K12 / MC4100 / BW2952).